The sequence spans 450 residues: UDP-N-acetylmuramoylalanine--D-glutamate ligase (450 aa).

115-121 contacts ATP; sequence GTNGKST.

Belongs to the MurCDEF family.

Its subcellular location is the cytoplasm. It catalyses the reaction UDP-N-acetyl-alpha-D-muramoyl-L-alanine + D-glutamate + ATP = UDP-N-acetyl-alpha-D-muramoyl-L-alanyl-D-glutamate + ADP + phosphate + H(+). It functions in the pathway cell wall biogenesis; peptidoglycan biosynthesis. Its function is as follows. Cell wall formation. Catalyzes the addition of glutamate to the nucleotide precursor UDP-N-acetylmuramoyl-L-alanine (UMA). The sequence is that of UDP-N-acetylmuramoylalanine--D-glutamate ligase from Syntrophotalea carbinolica (strain DSM 2380 / NBRC 103641 / GraBd1) (Pelobacter carbinolicus).